The chain runs to 200 residues: Small ribosomal subunit protein eS1 (200 aa).

The protein belongs to the eukaryotic ribosomal protein eS1 family. Part of the 30S ribosomal subunit.

The chain is Small ribosomal subunit protein eS1 from Thermococcus kodakarensis (strain ATCC BAA-918 / JCM 12380 / KOD1) (Pyrococcus kodakaraensis (strain KOD1)).